We begin with the raw amino-acid sequence, 187 residues long: UPF0200 protein PYRAB09750 (187 aa).

7-14 (GMPGSGKG) is a binding site for ATP.

This sequence belongs to the UPF0200 family.

The chain is UPF0200 protein PYRAB09750 from Pyrococcus abyssi (strain GE5 / Orsay).